A 746-amino-acid polypeptide reads, in one-letter code: Polyribonucleotide nucleotidyltransferase (746 aa).

Mg(2+)-binding residues include D515 and D521. A KH domain is found at 581 to 640; that stretch reads PRVIAVKIPVDKIGEVIGPKGKMINQIQEDTGADISIEDDGTVYIGATNGPSADAARSAI. Residues 652-724 form the S1 motif domain; the sequence is GERYLGTVVK…DRGKLSLSPV (73 aa).

Belongs to the polyribonucleotide nucleotidyltransferase family. Requires Mg(2+) as cofactor.

It is found in the cytoplasm. It carries out the reaction RNA(n+1) + phosphate = RNA(n) + a ribonucleoside 5'-diphosphate. Its function is as follows. Involved in mRNA degradation. Catalyzes the phosphorolysis of single-stranded polyribonucleotides processively in the 3'- to 5'-direction. This Renibacterium salmoninarum (strain ATCC 33209 / DSM 20767 / JCM 11484 / NBRC 15589 / NCIMB 2235) protein is Polyribonucleotide nucleotidyltransferase.